We begin with the raw amino-acid sequence, 235 residues long: Calcium-activated potassium channel subunit beta-2 (235 aa).

A ball and chain region spans residues 1-45 (MFIWTSGRTSSSYRHDEKRNIYQKIRDHDLLDKRKTVTALKAGED). At 1-46 (MFIWTSGRTSSSYRHDEKRNIYQKIRDHDLLDKRKTVTALKAGEDR) the chain is on the cytoplasmic side. A helical transmembrane segment spans residues 47–67 (AILLGLAMMVCSIMMYFLLGI). Residues 68–194 (TLLRSYMQSV…VILTKLYSSN (127 aa)) lie on the Extracellular side of the membrane. N-linked (GlcNAc...) asparagine glycosylation is found at Asn88, Asn96, and Asn119. Residues 195–215 (VLFHSLFWPTCMMAGGVAIVA) form a helical membrane-spanning segment. At 216-235 (MVKLTQYLSLLCERIQRINR) the chain is on the cytoplasmic side.

Belongs to the KCNMB (TC 8.A.14.1) family. KCNMB2 subfamily. As to quaternary structure, interacts with KCNMA1 tetramer. There are probably 4 molecules of KCMNB2 per KCNMA1 tetramer. Post-translationally, N-glycosylated. Expressed in kidney, heart and brain. Highly expressed in ovary. Expressed at low level in other tissues.

Its subcellular location is the membrane. Its function is as follows. Regulatory subunit of the calcium activated potassium KCNMA1 (maxiK) channel. Modulates the calcium sensitivity and gating kinetics of KCNMA1, thereby contributing to KCNMA1 channel diversity. Acts as a negative regulator that confers rapid and complete inactivation of KCNMA1 channel complex. May participate in KCNMA1 inactivation in chromaffin cells of the adrenal gland or in hippocampal CA1 neurons. The protein is Calcium-activated potassium channel subunit beta-2 (KCNMB2) of Homo sapiens (Human).